The sequence spans 930 residues: Polypeptide N-acetylgalactosaminyltransferase 5 (930 aa).

Over 1 to 12 (MNKIRKFFRGSG) the chain is Cytoplasmic. Residues 13–35 (RVLAFIFVASVIWLLFDMAALRL) traverse the membrane as a helical; Signal-anchor for type II membrane protein segment. Over 36-930 (SFSEINTGIL…KWKFEKYYDV (895 aa)) the chain is Lumenal. The interval 163-210 (GSEKDSFTVSRGVPLNKTAEHTETLDKKQEAPENYNLSSDTSKQASQR) is disordered. An N-linked (GlcNAc...) asparagine glycan is attached at Asn-178. The span at 180 to 193 (TAEHTETLDKKQEA) shows a compositional bias: basic and acidic residues. The segment covering 197-210 (YNLSSDTSKQASQR) has biased composition (polar residues). Asn-198 and Asn-213 each carry an N-linked (GlcNAc...) asparagine glycan. Ser-285 is subject to Phosphoserine. Asn-287 and Asn-309 each carry an N-linked (GlcNAc...) asparagine glycan. The interval 344-377 (LGESQGKHIPRSQSQTLSSPLAPKRAVSQSKPTL) is disordered. Asn-387 and Asn-403 each carry an N-linked (GlcNAc...) asparagine glycan. 3 cysteine pairs are disulfide-bonded: Cys-476-Cys-708, Cys-699-Cys-779, and Cys-812-Cys-825. The segment at 485-594 (LPTTSIIMCF…VGWLEPLLER (110 aa)) is catalytic subdomain A. 2 residues coordinate substrate: Asp-526 and Arg-555. N-linked (GlcNAc...) asparagine glycosylation occurs at Asn-568. Mn(2+) is bound at residue Asp-578. Substrate is bound at residue Ser-579. His-580 contributes to the Mn(2+) binding site. The tract at residues 654-716 (IIRCPVMAGG…PCSRVGHIFR (63 aa)) is catalytic subdomain B. Trp-685 is a substrate binding site. His-713 provides a ligand contact to Mn(2+). Substrate-binding residues include Arg-716 and Tyr-721. 3 N-linked (GlcNAc...) asparagine glycosylation sites follow: Asn-766, Asn-817, and Asn-835. A Ricin B-type lectin domain is found at 794-925 (KAPVVRASGV…TEPQQKWKFE (132 aa)). Cystine bridges form between Cys-848–Cys-863 and Cys-898–Cys-913. Asn-902 is a glycosylation site (N-linked (GlcNAc...) asparagine).

It belongs to the glycosyltransferase 2 family. GalNAc-T subfamily. In terms of assembly, interacts with EXT2. Does not interact with EXT1, EXTL1 or EXTL3. Mn(2+) is required as a cofactor. Predominantly expressed in sublingual gland. Expressed at lower level in stomach and small intestine. Weakly or not expressed in submandibular gland, parotid gland, kidney, liver, heart, brain, spleen, lung, skeletal muscle, testis, ovary, cervix and uterus.

It localises to the golgi apparatus membrane. The enzyme catalyses L-seryl-[protein] + UDP-N-acetyl-alpha-D-galactosamine = a 3-O-[N-acetyl-alpha-D-galactosaminyl]-L-seryl-[protein] + UDP + H(+). The catalysed reaction is L-threonyl-[protein] + UDP-N-acetyl-alpha-D-galactosamine = a 3-O-[N-acetyl-alpha-D-galactosaminyl]-L-threonyl-[protein] + UDP + H(+). It functions in the pathway protein modification; protein glycosylation. Its function is as follows. Catalyzes the initial reaction in O-linked oligosaccharide biosynthesis, the transfer of an N-acetyl-D-galactosamine residue to a serine or threonine residue on the protein receptor. Has activity toward EA2 peptide substrate, but has a weak activity toward Muc2, Muc1b, rMuc-2 or mG-Muc substrates. In Rattus norvegicus (Rat), this protein is Polypeptide N-acetylgalactosaminyltransferase 5 (Galnt5).